We begin with the raw amino-acid sequence, 322 residues long: NADH-cytochrome b5 reductase 2 (322 aa).

The helical transmembrane segment at Leu-30–Leu-46 threads the bilayer. An FAD-binding FR-type domain is found at Gln-71–Glu-176. Lys-179 to Leu-214 serves as a coordination point for FAD.

This sequence belongs to the flavoprotein pyridine nucleotide cytochrome reductase family. Requires FAD as cofactor.

Its subcellular location is the mitochondrion outer membrane. It catalyses the reaction 2 Fe(III)-[cytochrome b5] + NADH = 2 Fe(II)-[cytochrome b5] + NAD(+) + H(+). Its function is as follows. May mediate the reduction of outer membrane cytochrome b5. The polypeptide is NADH-cytochrome b5 reductase 2 (mcr1) (Emericella nidulans (strain FGSC A4 / ATCC 38163 / CBS 112.46 / NRRL 194 / M139) (Aspergillus nidulans)).